A 252-amino-acid chain; its full sequence is Imidazole glycerol phosphate synthase subunit HisF (252 aa).

Catalysis depends on residues Asp11 and Asp130.

This sequence belongs to the HisA/HisF family. In terms of assembly, heterodimer of HisH and HisF.

It is found in the cytoplasm. It catalyses the reaction 5-[(5-phospho-1-deoxy-D-ribulos-1-ylimino)methylamino]-1-(5-phospho-beta-D-ribosyl)imidazole-4-carboxamide + L-glutamine = D-erythro-1-(imidazol-4-yl)glycerol 3-phosphate + 5-amino-1-(5-phospho-beta-D-ribosyl)imidazole-4-carboxamide + L-glutamate + H(+). Its pathway is amino-acid biosynthesis; L-histidine biosynthesis; L-histidine from 5-phospho-alpha-D-ribose 1-diphosphate: step 5/9. Functionally, IGPS catalyzes the conversion of PRFAR and glutamine to IGP, AICAR and glutamate. The HisF subunit catalyzes the cyclization activity that produces IGP and AICAR from PRFAR using the ammonia provided by the HisH subunit. In Petrotoga mobilis (strain DSM 10674 / SJ95), this protein is Imidazole glycerol phosphate synthase subunit HisF.